The chain runs to 284 residues: 4-diphosphocytidyl-2-C-methyl-D-erythritol kinase (284 aa).

The active site involves Lys-14. An ATP-binding site is contributed by Pro-98–Ser-108. Asp-140 is a catalytic residue.

This sequence belongs to the GHMP kinase family. IspE subfamily.

The enzyme catalyses 4-CDP-2-C-methyl-D-erythritol + ATP = 4-CDP-2-C-methyl-D-erythritol 2-phosphate + ADP + H(+). Its pathway is isoprenoid biosynthesis; isopentenyl diphosphate biosynthesis via DXP pathway; isopentenyl diphosphate from 1-deoxy-D-xylulose 5-phosphate: step 3/6. Catalyzes the phosphorylation of the position 2 hydroxy group of 4-diphosphocytidyl-2C-methyl-D-erythritol. The polypeptide is 4-diphosphocytidyl-2-C-methyl-D-erythritol kinase (Shewanella pealeana (strain ATCC 700345 / ANG-SQ1)).